We begin with the raw amino-acid sequence, 121 residues long: Large ribosomal subunit protein uL18 (121 aa).

It belongs to the universal ribosomal protein uL18 family. In terms of assembly, part of the 50S ribosomal subunit; part of the 5S rRNA/L5/L18/L25 subcomplex. Contacts the 5S and 23S rRNAs.

This is one of the proteins that bind and probably mediate the attachment of the 5S RNA into the large ribosomal subunit, where it forms part of the central protuberance. This Verminephrobacter eiseniae (strain EF01-2) protein is Large ribosomal subunit protein uL18.